The chain runs to 375 residues: Platelet-derived growth factor receptor-like protein (375 aa).

Residues 1–21 (MKVWLLLGLLLVHEALEDVTG) form the signal peptide. The disordered stretch occupies residues 22 to 64 (QHLPKNKRPKEPGENRIKPTNKKVKPKIPKIKDRDSADSTPKT). A compositionally biased stretch (basic residues) spans 40–50 (PTNKKVKPKIP). The 98-residue stretch at 62–159 (PKTQSIMMQV…GYICRKDETK (98 aa)) folds into the Ig-like C2-type 1 domain. Cys96 and Cys143 are oxidised to a cystine. N-linked (GlcNAc...) asparagine glycosylation is found at Asn132 and Asn219. One can recognise an Ig-like C2-type 2 domain in the interval 272–375 (PSTTILASSN…TTVATTVEFS (104 aa)). Residues Cys293 and Cys357 are joined by a disulfide bond.

Forms a complex composed of PDGFRL, TNK2 and GRB2.

The protein localises to the secreted. This chain is Platelet-derived growth factor receptor-like protein (PDGFRL), found in Macaca fascicularis (Crab-eating macaque).